A 547-amino-acid chain; its full sequence is MARYIFITGGVVSSLGKGLASAALGALLQARGFSVRLRKLDPYLNVDPGTMSPFEHGEVFVTDDGAETDLDLGHYERFTGVAARSTDSVSSGRIYSTVLEKERRGDYLGKTIQVIPHVTNEIKDFIAIGDDEVDFMLCEIGGTVGDIEGLPFFEAIRQFTHDKPRGQCIFMHLTLLPYLAASGELKTKPTQHSVKELQSIGIAPDILVCRSEHPIPEKEREKIALFCNVRKEAVVAAYDLKTIYDAPLAYHEQGLDQAVLDAFDISPAPKPDLTVWRDVSDRVHNPEGEVKVAIVGKYTQLEDAYKSIAEALTHGGMANRVKVIVEWVDAEVFDTQDVAPHLEGFHAILVPGGFGERGTEGKIKAAQYAREHNVPYLGICLGMQMAVIEAARNVANIKAAGSEEFDHEAGKKRFEPVVYHLKEWVQGNAKVSRRVGDDKGGTMRLGAYDAALTPGTRVADIYHTSAIDERHRHRYEVDIKYRAQLEDAGLVFSGMSPDGKLPEIIEWPNHPWFIGVQFHPELKSKPFDPHPLFADFIRAAKENSRLV.

The segment at 1–265 (MARYIFITGG…DQAVLDAFDI (265 aa)) is amidoligase domain. Ser-13 contributes to the CTP binding site. A UTP-binding site is contributed by Ser-13. Residues 14-19 (SLGKGL) and Asp-71 contribute to the ATP site. Asp-71 and Glu-139 together coordinate Mg(2+). Residues 146 to 148 (DIE), 186 to 191 (KTKPTQ), and Lys-222 each bind CTP. UTP contacts are provided by residues 186–191 (KTKPTQ) and Lys-222. The Glutamine amidotransferase type-1 domain maps to 291 to 546 (KVAIVGKYTQ…IRAAKENSRL (256 aa)). Residue Gly-353 participates in L-glutamine binding. Catalysis depends on Cys-380, which acts as the Nucleophile; for glutamine hydrolysis. Residues 381 to 384 (LGMQ), Glu-404, and Arg-474 each bind L-glutamine. Active-site residues include His-519 and Glu-521.

It belongs to the CTP synthase family. As to quaternary structure, homotetramer.

It catalyses the reaction UTP + L-glutamine + ATP + H2O = CTP + L-glutamate + ADP + phosphate + 2 H(+). It carries out the reaction L-glutamine + H2O = L-glutamate + NH4(+). The enzyme catalyses UTP + NH4(+) + ATP = CTP + ADP + phosphate + 2 H(+). It participates in pyrimidine metabolism; CTP biosynthesis via de novo pathway; CTP from UDP: step 2/2. With respect to regulation, allosterically activated by GTP, when glutamine is the substrate; GTP has no effect on the reaction when ammonia is the substrate. The allosteric effector GTP functions by stabilizing the protein conformation that binds the tetrahedral intermediate(s) formed during glutamine hydrolysis. Inhibited by the product CTP, via allosteric rather than competitive inhibition. Functionally, catalyzes the ATP-dependent amination of UTP to CTP with either L-glutamine or ammonia as the source of nitrogen. Regulates intracellular CTP levels through interactions with the four ribonucleotide triphosphates. The polypeptide is CTP synthase (Roseobacter denitrificans (strain ATCC 33942 / OCh 114) (Erythrobacter sp. (strain OCh 114))).